The chain runs to 591 residues: L-fucose isomerase (591 aa).

Residues E337 and D361 each act as proton acceptor in the active site. 3 residues coordinate Mn(2+): E337, D361, and H528.

It belongs to the L-fucose isomerase family. Homohexamer. Mn(2+) serves as cofactor.

It localises to the cytoplasm. The enzyme catalyses L-fucose = L-fuculose. It participates in carbohydrate degradation; L-fucose degradation; L-lactaldehyde and glycerone phosphate from L-fucose: step 1/3. Converts the aldose L-fucose into the corresponding ketose L-fuculose. In Klebsiella pneumoniae (strain 342), this protein is L-fucose isomerase.